A 205-amino-acid chain; its full sequence is Recombination protein RecR (205 aa).

The C4-type zinc finger occupies cysteine 58–cysteine 75. The region spanning serine 83 to proline 182 is the Toprim domain.

Belongs to the RecR family.

Its function is as follows. May play a role in DNA repair. It seems to be involved in an RecBC-independent recombinational process of DNA repair. It may act with RecF and RecO. This Chlorobium limicola (strain DSM 245 / NBRC 103803 / 6330) protein is Recombination protein RecR.